The primary structure comprises 740 residues: Folic acid synthesis protein fol1 (740 aa).

2 DHNA regions span residues 39–160 and 161–280; these read DLIH…REID and DQFF…SCFS. An HPPK region spans residues 291–449; the sequence is IDNEAVYISL…EKIVDHDIKP (159 aa). The Pterin-binding domain occupies 471–730; that stretch reads TYIMAILNLT…DVYEMYKISK (260 aa). Residues 473–740 are DHPS; that stretch reads IMAILNLTPD…MSDAIWKEIY (268 aa). Residue N478 coordinates Mg(2+). Residues T517, D552, N571, D643, K683, and 718–720 each bind (7,8-dihydropterin-6-yl)methyl diphosphate; that span reads RVH.

This sequence in the N-terminal section; belongs to the DHNA family. It in the central section; belongs to the HPPK family. In the C-terminal section; belongs to the DHPS family. Mg(2+) is required as a cofactor.

It carries out the reaction 7,8-dihydroneopterin = 6-hydroxymethyl-7,8-dihydropterin + glycolaldehyde. The catalysed reaction is 6-hydroxymethyl-7,8-dihydropterin + ATP = (7,8-dihydropterin-6-yl)methyl diphosphate + AMP + H(+). The enzyme catalyses (7,8-dihydropterin-6-yl)methyl diphosphate + 4-aminobenzoate = 7,8-dihydropteroate + diphosphate. Its pathway is cofactor biosynthesis; tetrahydrofolate biosynthesis; 2-amino-4-hydroxy-6-hydroxymethyl-7,8-dihydropteridine diphosphate from 7,8-dihydroneopterin triphosphate: step 3/4. It participates in cofactor biosynthesis; tetrahydrofolate biosynthesis; 2-amino-4-hydroxy-6-hydroxymethyl-7,8-dihydropteridine diphosphate from 7,8-dihydroneopterin triphosphate: step 4/4. The protein operates within cofactor biosynthesis; tetrahydrofolate biosynthesis; 7,8-dihydrofolate from 2-amino-4-hydroxy-6-hydroxymethyl-7,8-dihydropteridine diphosphate and 4-aminobenzoate: step 1/2. Catalyzes three sequential steps of tetrahydrofolate biosynthesis. The protein is Folic acid synthesis protein fol1 (fol1) of Pneumocystis carinii.